The chain runs to 409 residues: Pyruvate dehydrogenase E1 component subunit alpha, mitochondrial (409 aa).

A Phosphothreonine modification is found at Thr6. Positions 109, 135, 136, 174, 182, 184, 213, 214, 215, 242, and 244 each coordinate pyruvate. Tyr135 and Arg136 together coordinate thiamine diphosphate. Thiamine diphosphate-binding residues include Gly182, Val184, Asp213, Gly214, Ala215, and Asn242. Asp213 contributes to the Mg(2+) binding site. 2 residues coordinate Mg(2+): Asn242 and Tyr244. At Tyr306 the chain carries Phosphotyrosine. His309 is a binding site for thiamine diphosphate. Ser310 and Ser312 each carry phosphoserine.

Tetramer of 2 alpha and 2 beta subunits. Thiamine diphosphate serves as cofactor. Requires Mg(2+) as cofactor.

The protein localises to the mitochondrion matrix. The catalysed reaction is N(6)-[(R)-lipoyl]-L-lysyl-[protein] + pyruvate + H(+) = N(6)-[(R)-S(8)-acetyldihydrolipoyl]-L-lysyl-[protein] + CO2. With respect to regulation, E1 activity is regulated by phosphorylation (inactivation) and dephosphorylation (activation) of the alpha subunit. The pyruvate dehydrogenase complex catalyzes the overall conversion of pyruvate to acetyl-CoA and CO(2). It contains multiple copies of three enzymatic components: pyruvate dehydrogenase (E1), dihydrolipoamide acetyltransferase (E2) and lipoamide dehydrogenase (E3). The sequence is that of Pyruvate dehydrogenase E1 component subunit alpha, mitochondrial (pda1) from Schizosaccharomyces pombe (strain 972 / ATCC 24843) (Fission yeast).